Reading from the N-terminus, the 415-residue chain is MSEASSKNLSETLFQNHKQAKETSSLTQYMPSSLELLDTRREQSSQAWYRNLRRLQWIWQGVDPVEQEEILARIASSKHSRTHDEWLDTVMGYRSGNWTYEWTRVGMLHQKQAAERQGEEAADQMFAAALYYSIAGYPHLRNDNLALQAQVLANNAYQEAAKLTGFVVKRLEFSYQNKKIAGYLHLRNTDSPKPVVLVSAGLDSLQTDMWRLFRDYLAKRDIAMLTIDMPSLGASSHWPLTEDSSCLHQAVLNQLADLPWVDHFRIGLIGFRFGGNAMARLAFLESDKVKACVSLGAPIHDIFTSPNKLAAMPKMYLDVLASRLGKNVVDVRSLSGQLMAWSLKVQGFMSGRRTKTPILALGLEGDPVSPYSDNQLVALFSQGGQAKKVKSKTISQGYEQSLDLAINWLEDELCK.

This sequence belongs to the FrsA family.

The catalysed reaction is a carboxylic ester + H2O = an alcohol + a carboxylate + H(+). In terms of biological role, catalyzes the hydrolysis of esters. The polypeptide is Esterase FrsA (Vibrio cholerae serotype O1 (strain ATCC 39541 / Classical Ogawa 395 / O395)).